The chain runs to 204 residues: Holliday junction branch migration complex subunit RuvA (204 aa).

Positions 1–63 are domain I; it reads MIASLRGTVI…EDAMKLYGFI (63 aa). The segment at 64-142 is domain II; it reads DDQSREMFAL…AYTVGVVDDG (79 aa). A flexible linker region spans residues 143-151; the sequence is APTAPTQGV. The tract at residues 152–204 is domain III; that stretch reads APVVVVDQVTQALTGLGFTEKQADDAVAAVLSADPGLDTSAALRAALAKLGGK.

It belongs to the RuvA family. Homotetramer. Forms an RuvA(8)-RuvB(12)-Holliday junction (HJ) complex. HJ DNA is sandwiched between 2 RuvA tetramers; dsDNA enters through RuvA and exits via RuvB. An RuvB hexamer assembles on each DNA strand where it exits the tetramer. Each RuvB hexamer is contacted by two RuvA subunits (via domain III) on 2 adjacent RuvB subunits; this complex drives branch migration. In the full resolvosome a probable DNA-RuvA(4)-RuvB(12)-RuvC(2) complex forms which resolves the HJ.

Its subcellular location is the cytoplasm. The RuvA-RuvB-RuvC complex processes Holliday junction (HJ) DNA during genetic recombination and DNA repair, while the RuvA-RuvB complex plays an important role in the rescue of blocked DNA replication forks via replication fork reversal (RFR). RuvA specifically binds to HJ cruciform DNA, conferring on it an open structure. The RuvB hexamer acts as an ATP-dependent pump, pulling dsDNA into and through the RuvAB complex. HJ branch migration allows RuvC to scan DNA until it finds its consensus sequence, where it cleaves and resolves the cruciform DNA. This chain is Holliday junction branch migration complex subunit RuvA, found in Corynebacterium efficiens (strain DSM 44549 / YS-314 / AJ 12310 / JCM 11189 / NBRC 100395).